The sequence spans 62 residues: Potassium channel toxin alpha-KTx Tx308 (62 aa).

A signal peptide spans 1 to 18; the sequence is MQKLFIVLLLFCILRLDA. 3 disulfide bridges follow: Cys-28/Cys-46, Cys-33/Cys-59, and Cys-37/Cys-61.

This sequence belongs to the short scorpion toxin superfamily. Potassium channel inhibitor family. Alpha-KTx 23 subfamily. As to expression, expressed by the venom gland.

The protein localises to the secreted. In terms of biological role, may block potassium channels. The sequence is that of Potassium channel toxin alpha-KTx Tx308 from Buthus israelis (Israeli scorpion).